The primary structure comprises 206 residues: Superoxide dismutase [Mn] (206 aa).

4 residues coordinate Mn(2+): histidine 27, histidine 82, aspartate 168, and histidine 172.

It belongs to the iron/manganese superoxide dismutase family. As to quaternary structure, homodimer. The cofactor is Mn(2+).

The catalysed reaction is 2 superoxide + 2 H(+) = H2O2 + O2. Functionally, destroys superoxide anion radicals which are normally produced within the cells and which are toxic to biological systems. This Escherichia coli (strain K12) protein is Superoxide dismutase [Mn] (sodA).